The primary structure comprises 287 residues: Urease accessory protein UreD (287 aa).

This sequence belongs to the UreD family. In terms of assembly, ureD, UreF and UreG form a complex that acts as a GTP-hydrolysis-dependent molecular chaperone, activating the urease apoprotein by helping to assemble the nickel containing metallocenter of UreC. The UreE protein probably delivers the nickel.

The protein localises to the cytoplasm. Its function is as follows. Required for maturation of urease via the functional incorporation of the urease nickel metallocenter. The chain is Urease accessory protein UreD from Aliivibrio fischeri (strain ATCC 700601 / ES114) (Vibrio fischeri).